We begin with the raw amino-acid sequence, 214 residues long: MVREPVKIQGTKEGLVIVVDEDVDIEVLKERIVDRIEKSLKFFEGATLNVRVKNSKFKDEELEDLKDFILKNYGVEIFIKKFQEKHIKNVTDDEIFNGLEEGITKFHRGTVRSGQVVKYYGNLVIIGDVNPGGLVQAAGNIVVTGTLRGIAHAGFTGNKEAFIVASSLKAMQLRIANIISRAPDKEEEVEYPEIAVVRKNKIIVRPLYHLSDLW.

The protein belongs to the MinC family. Interacts with MinD and FtsZ.

In terms of biological role, cell division inhibitor that blocks the formation of polar Z ring septums. Rapidly oscillates between the poles of the cell to destabilize FtsZ filaments that have formed before they mature into polar Z rings. Prevents FtsZ polymerization. The chain is Probable septum site-determining protein MinC from Caldanaerobacter subterraneus subsp. tengcongensis (strain DSM 15242 / JCM 11007 / NBRC 100824 / MB4) (Thermoanaerobacter tengcongensis).